The chain runs to 117 residues: B-enzyme (117 aa).

Asp-89 is an active-site residue.

It carries out the reaction Hydrolysis of (1-&gt;4)-beta-linkages between N-acetylmuramic acid and N-acetyl-D-glucosamine residues in a peptidoglycan and between N-acetyl-D-glucosamine residues in chitodextrins.. This Bacillus subtilis protein is B-enzyme (lyzB).